Here is a 428-residue protein sequence, read N- to C-terminus: Lysophosphatidic acid phosphatase type 6 (428 aa).

A mitochondrion-targeting transit peptide spans 1 to 32 (MITGVFSMRLWTPVGVLTSLAYCLHQRRVALA). Residues 58-168 (RHGARSPRKP…VFIRSTNIFR (111 aa)) form a substrate binding region. H59 functions as the Nucleophile in the catalytic mechanism. The Proton donor role is filled by D335.

Belongs to the histidine acid phosphatase family. Monomer.

The protein localises to the mitochondrion. The catalysed reaction is a phosphate monoester + H2O = an alcohol + phosphate. It carries out the reaction 1-(9Z-octadecenoyl)-sn-glycero-3-phosphate + H2O = 1-(9Z-octadecenoyl)-sn-glycerol + phosphate. Functionally, hydrolyzes lysophosphatidic acid (LPA) containing a medium length fatty acid chain to the corresponding monoacylglycerol. Has highest activity with lysophosphatidic acid containing myristate (C14:0), monounsaturated oleate (C18:1) or palmitate (C16:0), and lower activity with C18:0 and C6:0 lysophosphatidic acid. The chain is Lysophosphatidic acid phosphatase type 6 (ACP6) from Pongo abelii (Sumatran orangutan).